The chain runs to 86 residues: Anti-adapter protein IraP (86 aa).

A coiled-coil region spans residues 1-36 (MKNLIAELLFKLAQKEEESKELCAQVEALEIIVTAM).

Belongs to the IraP family. As to quaternary structure, interacts with RssB.

It localises to the cytoplasm. Inhibits RpoS proteolysis by regulating RssB activity, thereby increasing the stability of the sigma stress factor RpoS especially during phosphate starvation, but also in stationary phase and during nitrogen starvation. Its effect on RpoS stability is due to its interaction with RssB, which probably blocks the interaction of RssB with RpoS, and the consequent delivery of the RssB-RpoS complex to the ClpXP protein degradation pathway. The chain is Anti-adapter protein IraP from Escherichia coli O127:H6 (strain E2348/69 / EPEC).